The following is a 494-amino-acid chain: UPF0371 protein SP70585_0405 (494 aa).

The protein belongs to the UPF0371 family.

The sequence is that of UPF0371 protein SP70585_0405 from Streptococcus pneumoniae (strain 70585).